The chain runs to 59 residues: Large ribosomal subunit protein bL32c (59 aa).

The interval 36-59 (KSRSFSGVSEHPKPKGFSRQQTNK) is disordered.

Belongs to the bacterial ribosomal protein bL32 family.

Its subcellular location is the plastid. The protein localises to the chloroplast. This chain is Large ribosomal subunit protein bL32c, found in Oryza nivara (Indian wild rice).